The sequence spans 294 residues: Ribosomal RNA small subunit methyltransferase H (294 aa).

S-adenosyl-L-methionine-binding positions include 37 to 39, Asp-58, Leu-93, Asp-105, and Gln-112; that span reads GGH.

Belongs to the methyltransferase superfamily. RsmH family.

The protein resides in the cytoplasm. It catalyses the reaction cytidine(1402) in 16S rRNA + S-adenosyl-L-methionine = N(4)-methylcytidine(1402) in 16S rRNA + S-adenosyl-L-homocysteine + H(+). Functionally, specifically methylates the N4 position of cytidine in position 1402 (C1402) of 16S rRNA. The polypeptide is Ribosomal RNA small subunit methyltransferase H (Fervidobacterium nodosum (strain ATCC 35602 / DSM 5306 / Rt17-B1)).